We begin with the raw amino-acid sequence, 292 residues long: Probable 2-(5''-triphosphoribosyl)-3'-dephosphocoenzyme-A synthase (292 aa).

It belongs to the CitG/MdcB family.

It carries out the reaction 3'-dephospho-CoA + ATP = 2'-(5''-triphospho-alpha-D-ribosyl)-3'-dephospho-CoA + adenine. This chain is Probable 2-(5''-triphosphoribosyl)-3'-dephosphocoenzyme-A synthase, found in Shigella flexneri serotype 5b (strain 8401).